The primary structure comprises 248 residues: Small ribosomal subunit protein uS3 (248 aa).

The KH type-2 domain occupies 38 to 106 (IREFLSKGLD…QVALNILEVK (69 aa)). Positions 214 to 230 (SEINAPAERRGRGDRNA) are enriched in basic and acidic residues. The interval 214–248 (SEINAPAERRGRGDRNARPRRGGQRRQRAEQKQEG) is disordered.

It belongs to the universal ribosomal protein uS3 family. In terms of assembly, part of the 30S ribosomal subunit. Forms a tight complex with proteins S10 and S14.

In terms of biological role, binds the lower part of the 30S subunit head. Binds mRNA in the 70S ribosome, positioning it for translation. The polypeptide is Small ribosomal subunit protein uS3 (Corynebacterium glutamicum (strain R)).